A 148-amino-acid chain; its full sequence is Large ribosomal subunit protein uL15 (148 aa).

Residues 1–11 (MSEPIKLHDLR) are compositionally biased toward basic and acidic residues. Residues 1-52 (MSEPIKLHDLRPAAGSNKAKTRVGRGEASKGKTAGRGTKGTKARKQVSAAFE) form a disordered region.

It belongs to the universal ribosomal protein uL15 family. As to quaternary structure, part of the 50S ribosomal subunit.

Binds to the 23S rRNA. This Corynebacterium glutamicum (strain R) protein is Large ribosomal subunit protein uL15.